A 115-amino-acid chain; its full sequence is MEKMLLKSTTRHVRIFTAEVVDEELKFHPNKLTLDLDPDNEFIWNEDSLNKINEKFNGLIKERAGKDLDDYELRKIGSEIEGLIKFLLQNGQLSYNPDCRVMNYSMGLPMTNEVL.

The protein belongs to the complex I NdhM subunit family. As to quaternary structure, NDH-1 can be composed of about 15 different subunits; different subcomplexes with different compositions have been identified which probably have different functions.

The protein localises to the cellular thylakoid membrane. The enzyme catalyses a plastoquinone + NADH + (n+1) H(+)(in) = a plastoquinol + NAD(+) + n H(+)(out). It carries out the reaction a plastoquinone + NADPH + (n+1) H(+)(in) = a plastoquinol + NADP(+) + n H(+)(out). NDH-1 shuttles electrons from an unknown electron donor, via FMN and iron-sulfur (Fe-S) centers, to quinones in the respiratory and/or the photosynthetic chain. The immediate electron acceptor for the enzyme in this species is believed to be plastoquinone. Couples the redox reaction to proton translocation, and thus conserves the redox energy in a proton gradient. Cyanobacterial NDH-1 also plays a role in inorganic carbon-concentration. The polypeptide is NAD(P)H-quinone oxidoreductase subunit M (Prochlorococcus marinus (strain MIT 9301)).